The primary structure comprises 250 residues: Ribosomal RNA small subunit methyltransferase J (250 aa).

Residues 101 to 102 (RD), 117 to 118 (ER), 153 to 154 (SS), and aspartate 171 contribute to the S-adenosyl-L-methionine site.

The protein belongs to the methyltransferase superfamily. RsmJ family.

It localises to the cytoplasm. The catalysed reaction is guanosine(1516) in 16S rRNA + S-adenosyl-L-methionine = N(2)-methylguanosine(1516) in 16S rRNA + S-adenosyl-L-homocysteine + H(+). In terms of biological role, specifically methylates the guanosine in position 1516 of 16S rRNA. This Erwinia tasmaniensis (strain DSM 17950 / CFBP 7177 / CIP 109463 / NCPPB 4357 / Et1/99) protein is Ribosomal RNA small subunit methyltransferase J.